Consider the following 177-residue polypeptide: Large ribosomal subunit protein uL6 (177 aa).

A disordered region spans residues 155–177 (EPYKGKGVKHADERIFRKEGKKK).

Belongs to the universal ribosomal protein uL6 family. As to quaternary structure, part of the 50S ribosomal subunit.

Functionally, this protein binds to the 23S rRNA, and is important in its secondary structure. It is located near the subunit interface in the base of the L7/L12 stalk, and near the tRNA binding site of the peptidyltransferase center. This Bartonella tribocorum (strain CIP 105476 / IBS 506) protein is Large ribosomal subunit protein uL6.